Here is an 860-residue protein sequence, read N- to C-terminus: DNA mismatch repair protein MutS (860 aa).

607 to 614 (GPNMSGKS) contributes to the ATP binding site.

It belongs to the DNA mismatch repair MutS family.

In terms of biological role, this protein is involved in the repair of mismatches in DNA. It is possible that it carries out the mismatch recognition step. This protein has a weak ATPase activity. This Listeria welshimeri serovar 6b (strain ATCC 35897 / DSM 20650 / CCUG 15529 / CIP 8149 / NCTC 11857 / SLCC 5334 / V8) protein is DNA mismatch repair protein MutS.